A 144-amino-acid polypeptide reads, in one-letter code: Putative pre-16S rRNA nuclease (144 aa).

It belongs to the YqgF nuclease family.

It localises to the cytoplasm. In terms of biological role, could be a nuclease involved in processing of the 5'-end of pre-16S rRNA. In Lactiplantibacillus plantarum (strain ATCC BAA-793 / NCIMB 8826 / WCFS1) (Lactobacillus plantarum), this protein is Putative pre-16S rRNA nuclease.